The chain runs to 419 residues: MIFIDTAEIIVYGGKGGDGAASFRREKFIEKGGPDGGDGGKGGDVYLVTDPALLTLYDFKYQKEFRAEDGEPGRSQKQFGKDGKDLFIRIPVGVIVADLETQTVVDMDKPGMKLLVARGGRGGKGNARMATATRRAPRFRELGHEGEMRRLRLELKLVAHVGLVGLPNAGKSSLISVISKAKPEIAPYPFTTRSPVLGIVKKAEQSFVVSDVPGLIEGAHEGKGLGLTFLRHVERTKVLAIVIDAAAIDGYEPMQAYETIIGELRAYNPNLLEKPRVLVLNKIDLLQPEHIDQLKVQFADKESHVVLTSAATGEGTNQLVDVLFELISPTLSTEEPTAEFMTMELPPLPEDFSIRREDEYWVVEGRWARYISRYDTTQPWDFQYVQREIRRKKLEEMLRQMGAKEGETVVIHDKAFEIL.

In terms of domain architecture, Obg spans 1–158 (MIFIDTAEII…RRLRLELKLV (158 aa)). The 170-residue stretch at 159 to 328 (AHVGLVGLPN…LVDVLFELIS (170 aa)) folds into the OBG-type G domain. Residues 165-172 (GLPNAGKS), 190-194 (FTTRS), 211-214 (DVPG), 281-284 (NKID), and 309-311 (SAA) contribute to the GTP site. S172 and T192 together coordinate Mg(2+). One can recognise an OCT domain in the interval 344–419 (ELPPLPEDFS…VIHDKAFEIL (76 aa)).

The protein belongs to the TRAFAC class OBG-HflX-like GTPase superfamily. OBG GTPase family. Monomer. The cofactor is Mg(2+).

It localises to the cytoplasm. Functionally, an essential GTPase which binds GTP, GDP and possibly (p)ppGpp with moderate affinity, with high nucleotide exchange rates and a fairly low GTP hydrolysis rate. Plays a role in control of the cell cycle, stress response, ribosome biogenesis and in those bacteria that undergo differentiation, in morphogenesis control. The polypeptide is GTPase Obg (Coprothermobacter proteolyticus (strain ATCC 35245 / DSM 5265 / OCM 4 / BT)).